The primary structure comprises 219 residues: Large ribosomal subunit protein mL67 (219 aa).

The protein belongs to the mitochondrion-specific ribosomal protein mL67 family.

The protein localises to the nucleus. Its subcellular location is the mitochondrion. Its function is as follows. Transcription factor involved in regulation of RNA polymerase II-dependent transcription. Also involved in regulation of mitochondrial DNA recombination, maintenance and repair, and generation of homoplasmic cells. The sequence is that of Large ribosomal subunit protein mL67 (MHR1) from Kluyveromyces lactis (strain ATCC 8585 / CBS 2359 / DSM 70799 / NBRC 1267 / NRRL Y-1140 / WM37) (Yeast).